A 198-amino-acid polypeptide reads, in one-letter code: Ribonuclease HII (198 aa).

In terms of domain architecture, RNase H type-2 spans 3 to 198 (LSVGGIDEAG…SWETVGKLFK (196 aa)). 3 residues coordinate a divalent metal cation: Asp9, Glu10, and Asp104.

Belongs to the RNase HII family. Mn(2+) serves as cofactor. Mg(2+) is required as a cofactor.

It is found in the cytoplasm. The enzyme catalyses Endonucleolytic cleavage to 5'-phosphomonoester.. Functionally, endonuclease that specifically degrades the RNA of RNA-DNA hybrids. The chain is Ribonuclease HII from Pyrobaculum arsenaticum (strain DSM 13514 / JCM 11321 / PZ6).